Reading from the N-terminus, the 130-residue chain is Small ribosomal subunit protein uS11 (130 aa).

Belongs to the universal ribosomal protein uS11 family. Part of the 30S ribosomal subunit. Interacts with proteins S7 and S18. Binds to IF-3.

Located on the platform of the 30S subunit, it bridges several disparate RNA helices of the 16S rRNA. Forms part of the Shine-Dalgarno cleft in the 70S ribosome. The polypeptide is Small ribosomal subunit protein uS11 (Thermoanaerobacter sp. (strain X514)).